The following is a 264-amino-acid chain: Small ribosomal subunit protein eS1 (264 aa).

Positions 236-255 are enriched in basic and acidic residues; that stretch reads GEGGSGKRGEAGDKSERPEG. Residues 236–264 form a disordered region; it reads GEGGSGKRGEAGDKSERPEGYEPPVQESV.

Belongs to the eukaryotic ribosomal protein eS1 family. As to quaternary structure, component of the small ribosomal subunit. Mature ribosomes consist of a small (40S) and a large (60S) subunit. The 40S subunit contains about 33 different proteins and 1 molecule of RNA (18S). The 60S subunit contains about 49 different proteins and 3 molecules of RNA (28S, 5.8S and 5S).

The protein localises to the cytoplasm. This is Small ribosomal subunit protein eS1 from Spodoptera frugiperda (Fall armyworm).